Reading from the N-terminus, the 293-residue chain is Mitochondrial inner membrane protease atp23 (293 aa).

Residues 1–51 are disordered; it reads MSPAPTTSAGPASSGIPPSSLPTSTVTEDDTKPSSSSSKANDLLPRYLTND. Residues 8 to 22 show a composition bias toward low complexity; that stretch reads SAGPASSGIPPSSLP. Residue H190 participates in a divalent metal cation binding. E191 is a catalytic residue. H194 provides a ligand contact to a divalent metal cation.

This sequence belongs to the peptidase M76 family.

It is found in the mitochondrion inner membrane. Functionally, has a dual role in the assembly of mitochondrial ATPase. Acts as a protease that removes N-terminal residues of mitochondrial ATPase CF(0) subunit 6 at the intermembrane space side. Also involved in the correct assembly of the membrane-embedded ATPase CF(0) particle, probably mediating association of subunit 6 with the subunit 9 ring. This chain is Mitochondrial inner membrane protease atp23 (atp23), found in Neurospora crassa (strain ATCC 24698 / 74-OR23-1A / CBS 708.71 / DSM 1257 / FGSC 987).